A 148-amino-acid chain; its full sequence is Phosphoribosyl-AMP cyclohydrolase (148 aa).

Residue aspartate 91 coordinates Mg(2+). Position 92 (cysteine 92) interacts with Zn(2+). Aspartate 93 and aspartate 95 together coordinate Mg(2+). Positions 109 and 116 each coordinate Zn(2+).

This sequence belongs to the PRA-CH family. In terms of assembly, homodimer. Mg(2+) is required as a cofactor. Zn(2+) serves as cofactor.

The protein localises to the cytoplasm. The catalysed reaction is 1-(5-phospho-beta-D-ribosyl)-5'-AMP + H2O = 1-(5-phospho-beta-D-ribosyl)-5-[(5-phospho-beta-D-ribosylamino)methylideneamino]imidazole-4-carboxamide. It participates in amino-acid biosynthesis; L-histidine biosynthesis; L-histidine from 5-phospho-alpha-D-ribose 1-diphosphate: step 3/9. Functionally, catalyzes the hydrolysis of the adenine ring of phosphoribosyl-AMP. This chain is Phosphoribosyl-AMP cyclohydrolase, found in Rhodopseudomonas palustris (strain HaA2).